The sequence spans 55 residues: Large ribosomal subunit protein bL33 (55 aa).

The span at 1 to 11 shows a compositional bias: basic and acidic residues; that stretch reads MAKGGREKIKL. The interval 1–29 is disordered; sequence MAKGGREKIKLESSAGTGHFYTTSKNKRT. Over residues 14 to 24 the composition is skewed to polar residues; the sequence is SAGTGHFYTTS.

It belongs to the bacterial ribosomal protein bL33 family.

In Polynucleobacter asymbioticus (strain DSM 18221 / CIP 109841 / QLW-P1DMWA-1) (Polynucleobacter necessarius subsp. asymbioticus), this protein is Large ribosomal subunit protein bL33.